The following is a 251-amino-acid chain: Hydroxyacylglutathione hydrolase (251 aa).

Residues His53, His55, Asp57, His58, His110, Asp127, and His165 each coordinate Zn(2+).

Belongs to the metallo-beta-lactamase superfamily. Glyoxalase II family. In terms of assembly, monomer. Requires Zn(2+) as cofactor.

It catalyses the reaction an S-(2-hydroxyacyl)glutathione + H2O = a 2-hydroxy carboxylate + glutathione + H(+). It functions in the pathway secondary metabolite metabolism; methylglyoxal degradation; (R)-lactate from methylglyoxal: step 2/2. Functionally, thiolesterase that catalyzes the hydrolysis of S-D-lactoyl-glutathione to form glutathione and D-lactic acid. This Erwinia tasmaniensis (strain DSM 17950 / CFBP 7177 / CIP 109463 / NCPPB 4357 / Et1/99) protein is Hydroxyacylglutathione hydrolase.